We begin with the raw amino-acid sequence, 669 residues long: Gametogenetin-binding protein 2 (669 aa).

Disordered regions lie at residues 375-421 (QEKK…GNPC) and 452-475 (PHSN…SQEG). The span at 376–388 (EKKRQKKNRKKNK) shows a compositional bias: basic residues. Residues 398-408 (ETKSANPSQKN) are compositionally biased toward polar residues.

The protein localises to the cytoplasm. Functionally, may be involved in spermatogenesis. The sequence is that of Gametogenetin-binding protein 2 (ggnbp2) from Xenopus tropicalis (Western clawed frog).